The sequence spans 309 residues: MILTVTLNPAIDVSYPLDELKCDTVNRVVDVTKTPGDKGLNVCRVLNDFGETVKATGCIGGESGDFIINHLPDSILSRFYKISGDTRTCIAILHEGNQTEILEKGPLLSVEEIDGFTHHFKYLLNDVDVVTLSGSLPAGMPDDYYQKLIGIANLNGKKTVLDCSGNALEAVLKGDSKPTVIKPNLEELSQLLGKEMTKDFEALKEVLQDELFEGIEWIIVSLGADGVFAKHNDTFYNVDIPKIEIVSAVGSGDSTVAGIASGLANDEDDRALLTKANVLGMLNAQEKTTGHVNMANYDKLYQSIKVKEV.

The protein belongs to the carbohydrate kinase PfkB family. LacC subfamily.

It catalyses the reaction D-tagatofuranose 6-phosphate + ATP = D-tagatofuranose 1,6-bisphosphate + ADP + H(+). The protein operates within carbohydrate metabolism; D-tagatose 6-phosphate degradation; D-glyceraldehyde 3-phosphate and glycerone phosphate from D-tagatose 6-phosphate: step 1/2. The polypeptide is Tagatose-6-phosphate kinase (Streptococcus pyogenes serotype M4 (strain MGAS10750)).